Consider the following 201-residue polypeptide: Transgelin (201 aa).

Ala2 carries the post-translational modification N-acetylalanine. Residues 24-137 enclose the Calponin-homology (CH) domain; sequence EELEERLVEW…RTLMALGSLA (114 aa). Ser166 carries the phosphoserine modification. An N6-acetyllysine modification is found at Lys172. Residues 175–200 form a Calponin-like repeat; the sequence is IGLQMGSNRGASQAGMTGYGRPRQII. Ser181 is modified (phosphoserine). Arg183 is modified (omega-N-methylarginine).

The protein belongs to the calponin family.

It is found in the cytoplasm. Actin cross-linking/gelling protein. Involved in calcium interactions and contractile properties of the cell that may contribute to replicative senescence. The polypeptide is Transgelin (TAGLN) (Homo sapiens (Human)).